The following is a 488-amino-acid chain: Pre-glycoprotein polyprotein GP complex (488 aa).

Glycine 2 is lipidated: N-myristoyl glycine; by host. Residues 2 to 17 (GQLFSFFEEVPNIIHE) lie on the Extracellular side of the membrane. The chain crosses the membrane as a helical span at residues 18 to 32 (AINIALIAVSLIAAL). Lysine 33 is a topological domain (cytoplasmic). A helical transmembrane segment spans residues 34–53 (GMINLWKSGLFQLIFFLTLA). Extracellular loops occupy residues 54 to 58 (GRSCS) and 59 to 427 (FRIG…TLVD). Cysteine 57 contacts Zn(2+). Residues asparagine 69, asparagine 88, asparagine 99, asparagine 125, asparagine 171, asparagine 178, and asparagine 222 are each glycosylated (N-linked (GlcNAc...) asparagine; by host). Disulfide bonds link cysteine 85–cysteine 229, cysteine 274–cysteine 287, cysteine 296–cysteine 305, and cysteine 359–cysteine 380. Asparagine 360, asparagine 368, asparagine 385, and asparagine 390 each carry an N-linked (GlcNAc...) asparagine; by host glycan. A helical transmembrane segment spans residues 428 to 448 (ICFWSTLFFTTTLFLHLVGFP). The Cytoplasmic portion of the chain corresponds to 449 to 488 (THRHIRGEPCPLPHRLNSRGGCRCGKYPELKKPITWHKNH). 7 residues coordinate Zn(2+): histidine 450, histidine 452, cysteine 458, histidine 462, cysteine 470, cysteine 472, and histidine 488.

Belongs to the arenaviridae GPC protein family. In terms of assembly, homotetramer; disulfide-linked. Homotetramer. GP2 homotetramers bind through ionic interactions with GP1 homotetramers to form the GP complex together with the stable signal peptide. The GP-C polyprotein interacts with the host protease MBTPS1/SKI-1 resulting in the polyprotein processing. Post-translationally, specific enzymatic cleavages in vivo yield mature proteins. GP-C polyprotein is cleaved in the endoplasmic reticulum by the host protease MBTPS1. Only cleaved glycoprotein is incorporated into virions. In terms of processing, the SSP remains stably associated with the GP complex following cleavage by signal peptidase and plays crucial roles in the trafficking of GP through the secretory pathway. Myristoylation is necessary for GP2-mediated fusion activity.

It is found in the virion membrane. It localises to the host endoplasmic reticulum membrane. The protein localises to the host Golgi apparatus membrane. Its subcellular location is the host cell membrane. Interacts with the host receptor. Mediates virus attachment to host TFRC. This attachment induces virion internalization predominantly through clathrin-mediated endocytosis. Its function is as follows. Class I viral fusion protein that directs fusion of viral and host endosomal membranes, leading to delivery of the nucleocapsid into the cytoplasm. Membrane fusion is mediated by irreversible conformational changes induced upon acidification in the endosome. Functionally, stable signal peptide (SSP): cleaved and functions as a signal peptide. In addition, it is also retained as the third component of the GP complex. The SSP is required for efficient glycoprotein expression, post-translational maturation cleavage of GP1 and GP2, glycoprotein transport to the cell surface plasma membrane, formation of infectious virus particles, and acid pH-dependent glycoprotein-mediated cell fusion. This is Pre-glycoprotein polyprotein GP complex from Homo sapiens (Human).